Consider the following 126-residue polypeptide: Holo-[acyl-carrier-protein] synthase (126 aa).

Residues Asp-9 and Glu-58 each contribute to the Mg(2+) site.

The protein belongs to the P-Pant transferase superfamily. AcpS family. The cofactor is Mg(2+).

Its subcellular location is the cytoplasm. It catalyses the reaction apo-[ACP] + CoA = holo-[ACP] + adenosine 3',5'-bisphosphate + H(+). In terms of biological role, transfers the 4'-phosphopantetheine moiety from coenzyme A to a Ser of acyl-carrier-protein. The polypeptide is Holo-[acyl-carrier-protein] synthase (Klebsiella pneumoniae (strain 342)).